The following is a 422-amino-acid chain: UDP-N-acetylmuramoylalanine--D-glutamate ligase (422 aa).

An ATP-binding site is contributed by 102–108 (GTNGKTT).

It belongs to the MurCDEF family.

Its subcellular location is the cytoplasm. It carries out the reaction UDP-N-acetyl-alpha-D-muramoyl-L-alanine + D-glutamate + ATP = UDP-N-acetyl-alpha-D-muramoyl-L-alanyl-D-glutamate + ADP + phosphate + H(+). It functions in the pathway cell wall biogenesis; peptidoglycan biosynthesis. Its function is as follows. Cell wall formation. Catalyzes the addition of glutamate to the nucleotide precursor UDP-N-acetylmuramoyl-L-alanine (UMA). The sequence is that of UDP-N-acetylmuramoylalanine--D-glutamate ligase from Helicobacter pylori (strain J99 / ATCC 700824) (Campylobacter pylori J99).